The sequence spans 205 residues: Ephrin-A1 (205 aa).

The first 17 residues, 1–17, serve as a signal peptide directing secretion; sequence MEFLWAPLLGLCCSLAA. The region spanning 18-161 is the Ephrin RBD domain; sequence ADRHIVFWNS…THNPQAHVNP (144 aa). A glycan (N-linked (GlcNAc...) asparagine) is linked at N26. 2 disulfides stabilise this stretch: C51–C92 and C80–C140. S182 carries the GPI-anchor amidated serine lipid modification. A propeptide spans 183–205 (removed in mature form); that stretch reads AAPRLFPLVWAVLLLPLLLLQSQ.

It belongs to the ephrin family. As to quaternary structure, monomer. Homodimer. Forms heterodimers with EPHA2. Binds to the receptor tyrosine kinases EPHA2, EPHA3, EPHA4, EPHA5, EPHA6 and EPHA7. Also binds with low affinity to EPHA1. Undergoes proteolysis by a metalloprotease to give rise to a soluble monomeric form. In terms of processing, N-Glycosylation is required for binding to EPHA2 receptor and inducing its internalization. In terms of tissue distribution, expressed in myogenic progenitor cells.

It localises to the cell membrane. The protein resides in the secreted. Cell surface GPI-bound ligand for Eph receptors, a family of receptor tyrosine kinases which are crucial for migration, repulsion and adhesion during neuronal, vascular and epithelial development. Binds promiscuously Eph receptors residing on adjacent cells, leading to contact-dependent bidirectional signaling into neighboring cells. Plays an important role in angiogenesis and tumor neovascularization. The recruitment of VAV2, VAV3 and PI3-kinase p85 subunit by phosphorylated EPHA2 is critical for EFNA1-induced RAC1 GTPase activation and vascular endothelial cell migration and assembly. Exerts anti-oncogenic effects in tumor cells through activation and down-regulation of EPHA2. Activates EPHA2 by inducing tyrosine phosphorylation which leads to its internalization and degradation. Acts as a negative regulator in the tumorigenesis of gliomas by down-regulating EPHA2 and FAK. Can evoke collapse of embryonic neuronal growth cone and regulates dendritic spine morphogenesis. This chain is Ephrin-A1 (Efna1), found in Mus musculus (Mouse).